The primary structure comprises 63 residues: Muscarinic toxin 2 (63 aa).

Disulfide bonds link C3–C22, C17–C42, C44–C55, and C56–C61.

The protein belongs to the three-finger toxin family. Short-chain subfamily. Type B muscarinic toxin sub-subfamily. As to quaternary structure, monomer. As to expression, expressed by the venom gland.

It is found in the secreted. Blocks M2 muscarinic acetylcholine receptors (CHRM2). Fully blocks the binding of N-methylscopolamine (NMS) and oxotremorine-M to M2 receptors, slightly increased NMS binding to M1 receptors. This chain is Muscarinic toxin 2, found in Dendroaspis angusticeps (Eastern green mamba).